The sequence spans 618 residues: Mitochondrial Rho GTPase 2 (618 aa).

Residues 1–592 (MRRDVRILLL…ELHPSSFWLR (592 aa)) lie on the Cytoplasmic side of the membrane. Positions 2–168 (RRDVRILLLG…FYYAQKAVLH (167 aa)) constitute a Miro 1 domain. 4 residues coordinate GTP: Gly16, Lys17, Thr18, and Ser19. Thr18 lines the Mg(2+) pocket. Mg(2+) is bound by residues Pro35 and Asp57. Ser59 is a GTP binding site. A Glycyl lysine isopeptide (Lys-Gly) (interchain with G-Cter in ubiquitin) cross-link involves residue Lys96. GTP is bound by residues Asn118, Lys119, Asp121, Ala149, and Lys150. Lys119 participates in a covalent cross-link: Glycyl lysine isopeptide (Lys-Gly) (interchain with G-Cter in ubiquitin). Lys164 is covalently cross-linked (Glycyl lysine isopeptide (Lys-Gly) (interchain with G-Cter in ubiquitin)). EF-hand domains are found at residues 184-219 (ACAQALTRIFRLSDQDLDQALSDEELNAFQKSCFGH) and 304-339 (LGYQFVQRVFEKHDQDRDGALSPVELQSLFSVFPAA). Positions 197, 199, 201, 208, 317, 319, 321, and 328 each coordinate Ca(2+). The region spanning 414 to 576 (RSVLLCKVVG…FTQLATMAAF (163 aa)) is the Miro 2 domain. GTP contacts are provided by Gly426, Gly428, Lys429, Ser430, and Ala431. The GDP site is built by Gly426, Gly428, Lys429, Ser430, and Ala431. A Mg(2+)-binding site is contributed by Ser430. Glu471 contacts Mg(2+). The GTP site is built by Lys525, Asp527, and Cys556. Residues Lys525, Asp527, and Cys556 each coordinate GDP. The chain crosses the membrane as a helical; Anchor for type IV membrane protein span at residues 593–615 (GLLGVVGAAVAAVLSFSLYRVLV). At 616–618 (KSQ) the chain is on the mitochondrial intermembrane side.

This sequence belongs to the mitochondrial Rho GTPase family. In terms of assembly, homodimer. Interacts with the kinesin-binding proteins TRAK1/OIP106 and TRAK2/GRIF1, forming a link between mitochondria and the trafficking apparatus of the microtubules. Interacts with ARMCX3. Found in a complex with KIF5B, OGT, RHOT1 and TRAK1. Post-translationally, ubiquitinated by PRKN in a PINK1-dependent manner, leading to its degradation. Ubiquitously expressed. Highly expressed in heart, liver, skeletal muscle, kidney and pancreas.

The protein localises to the mitochondrion outer membrane. The catalysed reaction is GTP + H2O = GDP + phosphate + H(+). It carries out the reaction ATP + H2O = ADP + phosphate + H(+). The enzyme catalyses UTP + H2O = UDP + phosphate + H(+). Atypical mitochondrial nucleoside-triphosphatase (NTPase) involved in mitochondrial trafficking. Probably involved in control of anterograde transport of mitochondria and their subcellular distribution. Can hydrolyze GTP. Can hydrolyze ATP and UTP. The chain is Mitochondrial Rho GTPase 2 (RHOT2) from Homo sapiens (Human).